A 223-amino-acid polypeptide reads, in one-letter code: Small ribosomal subunit protein uS5 (223 aa).

Positions 1–66 are disordered; sequence MPPQQQRGRG…AERAQAETEF (66 aa). Positions 13 to 22 are enriched in gly residues; sequence RGPGGPGGPG. Over residues 53–66 the composition is skewed to basic and acidic residues; it reads GGDKAERAQAETEF. Residues 66 to 129 enclose the S5 DRBM domain; that stretch reads FQERVVQIRR…SDARKALIRV (64 aa).

This sequence belongs to the universal ribosomal protein uS5 family. As to quaternary structure, part of the 30S ribosomal subunit. Contacts proteins S4 and S8.

With S4 and S12 plays an important role in translational accuracy. In terms of biological role, located at the back of the 30S subunit body where it stabilizes the conformation of the head with respect to the body. The chain is Small ribosomal subunit protein uS5 from Gloeobacter violaceus (strain ATCC 29082 / PCC 7421).